The primary structure comprises 163 residues: uncharacterized protein (163 aa).

The Cytoplasmic segment spans residues 1–33; it reads MKTLDKITNYDLFDFADEFLKFVPVFRPNPTVT. Residues 34–54 traverse the membrane as a helical segment; that stretch reads CLFGNPLTNLLVNGTGAACFF. Over 55 to 117 the chain is Extracellular; it reads EFCSLALIKV…SLGMALPDDD (63 aa). The helical transmembrane segment at 118 to 138 threads the bilayer; it reads VLLSITFWFLCNSSFSILFVF. The Cytoplasmic portion of the chain corresponds to 139 to 163; that stretch reads ELRIFLRTVNNLLVVFLSVLKRNDL.

The protein localises to the membrane. This is an uncharacterized protein from Saccharomyces cerevisiae (strain ATCC 204508 / S288c) (Baker's yeast).